Consider the following 180-residue polypeptide: Der GTPase-activating protein YihI (180 aa).

2 disordered regions span residues 1 to 90 (MSRK…QERR) and 145 to 180 (EPEE…DYKG). The span at 23 to 32 (NRTESDVEGR) shows a compositional bias: basic and acidic residues. A compositionally biased stretch (basic residues) spans 33–43 (LRKRAKKRKGL). 2 stretches are compositionally biased toward basic and acidic residues: residues 50–68 (SDAE…DPRL) and 80–90 (PVKKQTKQERR). Positions 165 to 180 (DLLADFDDINFDDYKG) are enriched in acidic residues.

Belongs to the YihI family. In terms of assembly, interacts with Der.

Functionally, a GTPase-activating protein (GAP) that modifies Der/EngA GTPase function. May play a role in ribosome biogenesis. The chain is Der GTPase-activating protein YihI from Vibrio campbellii (strain ATCC BAA-1116).